The primary structure comprises 162 residues: Allantoicase (162 aa).

This sequence belongs to the allantoicase family. As to quaternary structure, homohexamer. In terms of tissue distribution, expressed in zygote.

The enzyme catalyses allantoate + H2O = (S)-ureidoglycolate + urea. It functions in the pathway nitrogen metabolism; (S)-allantoin degradation; (S)-ureidoglycolate from allantoate (aminidohydrolase route): step 1/1. In terms of biological role, catalyzes the degradation of allantoate to (-)-ureidoglycolate and (+)-ureidoglycolate to glyoxylate. In Chlamydomonas reinhardtii (Chlamydomonas smithii), this protein is Allantoicase.